The following is a 97-amino-acid chain: Plasmid stability protein StbC (97 aa).

Its function is as follows. Involved in plasmid stability. The protein is Plasmid stability protein StbC (stbC) of Pseudomonas syringae pv. tomato (strain ATCC BAA-871 / DC3000).